Reading from the N-terminus, the 139-residue chain is Putative pre-16S rRNA nuclease (139 aa).

It belongs to the YqgF nuclease family.

It is found in the cytoplasm. Its function is as follows. Could be a nuclease involved in processing of the 5'-end of pre-16S rRNA. The chain is Putative pre-16S rRNA nuclease from Streptococcus thermophilus (strain CNRZ 1066).